We begin with the raw amino-acid sequence, 110 residues long: NADH-quinone oxidoreductase subunit K (110 aa).

3 helical membrane-spanning segments follow: residues 13 to 33, 38 to 58, and 70 to 90; these read VTHG…GIII, ILIL…NFLI, and VFVF…LAIV.

This sequence belongs to the complex I subunit 4L family. NDH-1 is composed of 14 different subunits. Subunits NuoA, H, J, K, L, M, N constitute the membrane sector of the complex.

It is found in the cell inner membrane. It carries out the reaction a quinone + NADH + 5 H(+)(in) = a quinol + NAD(+) + 4 H(+)(out). Its function is as follows. NDH-1 shuttles electrons from NADH, via FMN and iron-sulfur (Fe-S) centers, to quinones in the respiratory chain. The immediate electron acceptor for the enzyme in this species is believed to be ubiquinone. Couples the redox reaction to proton translocation (for every two electrons transferred, four hydrogen ions are translocated across the cytoplasmic membrane), and thus conserves the redox energy in a proton gradient. This is NADH-quinone oxidoreductase subunit K from Francisella tularensis subsp. tularensis (strain FSC 198).